Consider the following 156-residue polypeptide: tRNA (cytidine(34)-2'-O)-methyltransferase (156 aa).

S-adenosyl-L-methionine-binding residues include Gly100, Ile122, and Ser130.

The protein belongs to the class IV-like SAM-binding methyltransferase superfamily. RNA methyltransferase TrmH family. TrmL subfamily. Homodimer.

The protein localises to the cytoplasm. It catalyses the reaction cytidine(34) in tRNA + S-adenosyl-L-methionine = 2'-O-methylcytidine(34) in tRNA + S-adenosyl-L-homocysteine + H(+). The catalysed reaction is 5-carboxymethylaminomethyluridine(34) in tRNA(Leu) + S-adenosyl-L-methionine = 5-carboxymethylaminomethyl-2'-O-methyluridine(34) in tRNA(Leu) + S-adenosyl-L-homocysteine + H(+). In terms of biological role, methylates the ribose at the nucleotide 34 wobble position in the two leucyl isoacceptors tRNA(Leu)(CmAA) and tRNA(Leu)(cmnm5UmAA). Catalyzes the methyl transfer from S-adenosyl-L-methionine to the 2'-OH of the wobble nucleotide. The protein is tRNA (cytidine(34)-2'-O)-methyltransferase of Aeromonas hydrophila subsp. hydrophila (strain ATCC 7966 / DSM 30187 / BCRC 13018 / CCUG 14551 / JCM 1027 / KCTC 2358 / NCIMB 9240 / NCTC 8049).